The chain runs to 484 residues: Fork head protein homolog 1 (484 aa).

The FHA domain maps to Val-76–Ile-142. The segment at residues Ile-302–Ala-393 is a DNA-binding region (fork-head).

In terms of assembly, interacts (via FHA domain) with ECM30, GLN3, URE2, MPH1 AND FDO1. Interacts with the origin recognition complex (ORC) composed of ORC1 to ORC6.

The protein resides in the nucleus. The protein localises to the cytoplasm. Its subcellular location is the cytosol. Functionally, transcription factor that regulates the expression of the CLB2 cluster of genes during the G2/M phase of the mitotic cell cycle. The CLB2 cluster of genes includes mitotic regulators such as CLB1, CLB2, CDC5 and CDC20 as well as SWI5 and ACE2, transcription factors required for the subsequent temporal wave of cell cycle regulated gene expression in the M/G1 phase interval. Involved in HMRa silencing. FKH1 and FKH2 associate with the coding regions of active genes and influence, in opposing ways, transcriptional elongation and termination, and coordinate early transcription elongation and pre-mRNA processing. Both FKH1 and FKH2 play a role as regulators of lifespan in collaboration with the anaphase-promoting complex (APC), likely through combined regulation of stress response, genomic stability, and cell cycle regulation. FKH1 and FKH2 function also in controlling yeast cell morphology by preventing preudohyphal growth. Acts as a rate-limiting replication origin activator via its interaction with the origin recognition complex (ORC). Plays a transcription-independent role in recombination donor preference during mating-type switching through binding to the recombination enhancer (RE), a 700-bp cis-acting element that controls recombination along the left arm of chromosome III. This Saccharomyces cerevisiae (strain ATCC 204508 / S288c) (Baker's yeast) protein is Fork head protein homolog 1.